Here is a 990-residue protein sequence, read N- to C-terminus: Activator of stress genes protein 1 (990 aa).

The segment at 1–88 is disordered; that stretch reads MPKREIEDTQ…NKPKSQENKR (88 aa). The span at 9-23 shows a compositional bias: polar residues; sequence TQSPYSSTGLVSTGE. Low complexity predominate over residues 24–61; it reads SPKTSTSTPTSSTNNRAATTTTNNTSTTSTSLLKSNSN. A DNA-binding region (zn(2)-C6 fungal-type) is located at residues 95–121; that stretch reads CDTCRQKKVKCDGKQPCIHCTVYSYKC. 3 stretches are compositionally biased toward low complexity: residues 160–179, 282–293, and 773–793; these read NNNS…QQHV, SFDDSSNSAVSS, and TATT…NSNS. 4 disordered regions span residues 160–192, 255–295, 764–800, and 915–944; these read NNNS…PADE, QDPD…SSPR, RTAS…TLPA, and SNNN…NGVA.

This sequence belongs to the ASG1 family.

The protein localises to the nucleus. Transcription factor necessary to sustain growth on non-fermentative carbon sources such as sodium acetate, acetic acid, or ethanol. Plays a role in hyphal formation. The protein is Activator of stress genes protein 1 (ASG1) of Candida albicans (strain SC5314 / ATCC MYA-2876) (Yeast).